Here is a 388-residue protein sequence, read N- to C-terminus: Methylthioribose-1-phosphate isomerase (388 aa).

Aspartate 258 serves as the catalytic Proton donor.

Belongs to the eIF-2B alpha/beta/delta subunits family. MtnA subfamily.

It localises to the cytoplasm. The protein localises to the nucleus. The catalysed reaction is 5-(methylsulfanyl)-alpha-D-ribose 1-phosphate = 5-(methylsulfanyl)-D-ribulose 1-phosphate. It functions in the pathway amino-acid biosynthesis; L-methionine biosynthesis via salvage pathway; L-methionine from S-methyl-5-thio-alpha-D-ribose 1-phosphate: step 1/6. In terms of biological role, catalyzes the interconversion of methylthioribose-1-phosphate (MTR-1-P) into methylthioribulose-1-phosphate (MTRu-1-P). This Neurospora crassa (strain ATCC 24698 / 74-OR23-1A / CBS 708.71 / DSM 1257 / FGSC 987) protein is Methylthioribose-1-phosphate isomerase (mri-1).